A 718-amino-acid polypeptide reads, in one-letter code: Heat shock 70 kDa protein 7, chloroplastic (718 aa).

The transit peptide at 1 to 92 (MASSAAQIHI…IDLGTTNSAV (92 aa)) directs the protein to the chloroplast. Residues 668-678 (QIGQSLYNQPQ) show a composition bias toward polar residues. The segment at 668-718 (QIGQSLYNQPQPGGADSPPGGEASSSSDTSSSAKGGDNGGDVIDADFTDSN) is disordered.

Belongs to the heat shock protein 70 (TC 1.A.33) family. DnaK subfamily.

The protein localises to the plastid. It is found in the chloroplast stroma. Acts redundantly with HSP70-6 in the thermotolerance of germinating seeds. Plays an important role in the protein precursor import into chloroplasts. In terms of biological role, in cooperation with other chaperones, Hsp70s are key components that facilitate folding of de novo synthesized proteins, assist translocation of precursor proteins into organelles, and are responsible for degradation of damaged protein under stress conditions. This chain is Heat shock 70 kDa protein 7, chloroplastic (HSP70-7), found in Arabidopsis thaliana (Mouse-ear cress).